Consider the following 471-residue polypeptide: MFRGAWMWPGKDAAALTICCCCCCWAPRQSDKPCADSERAQRWRLSLASLLFFTVLLADHLWLCAGARPRARELSSAMRPPWGAGRERQPVPPRAVLPPPPPSPGEPSASSGTCGPRYSNLTKAAPAAGSGPVCNGVPEPTGLDAACTKLESLQRLFEPTTPAPPLRPPDSPSRAPEFPSAKKNLLKGHFRNFTLSFCDTYTVWDLLLGMDRPDSLDCSLDTLLGDLLAVVASPGSGTWEACSNCIEAYQRLDRHAQEKYDEFDLVLHKYLQAEEYSIRSCTKGCKAVYKAWLCSEYFSVTQQECQNWVPCKQYCLEVQTRCPFILPDNEEMVYGGLPGFICTGLMDTSPKRPETKCCDVQWVSCESEKKKFKDSEPPKTHHQQFHHSYFHHYHHQYHHYHPRHEPPSRVSNKPSLLPVSGGSRLSPSRIRLCVLVLILLHTVVSFSSSQSGGGLGLETLPALEEGLTQEE.

The chain crosses the membrane as a helical span at residues 47-67 (LASLLFFTVLLADHLWLCAGA). Residues 76–115 (SAMRPPWGAGRERQPVPPRAVLPPPPPSPGEPSASSGTCG) form a disordered region. A compositionally biased stretch (pro residues) spans 90–105 (PVPPRAVLPPPPPSPG). N-linked (GlcNAc...) asparagine glycosylation occurs at Asn-120. Disordered regions lie at residues 158-178 (EPTTPAPPLRPPDSPSRAPEF) and 399-424 (HYHPRHEPPSRVSNKPSLLPVSGGSR). Residues 161–171 (TPAPPLRPPDS) are compositionally biased toward pro residues. The helical transmembrane segment at 432–452 (LCVLVLILLHTVVSFSSSQSG) threads the bilayer.

Belongs to the NALF family.

It is found in the membrane. Probable component of the NALCN channel complex, a channel that regulates the resting membrane potential and controls neuronal excitability. The polypeptide is NALCN channel auxiliary factor 2 (Nalf2) (Mus musculus (Mouse)).